The following is a 96-amino-acid chain: Putative pterin-4-alpha-carbinolamine dehydratase (96 aa).

The protein belongs to the pterin-4-alpha-carbinolamine dehydratase family.

The enzyme catalyses (4aS,6R)-4a-hydroxy-L-erythro-5,6,7,8-tetrahydrobiopterin = (6R)-L-erythro-6,7-dihydrobiopterin + H2O. The protein is Putative pterin-4-alpha-carbinolamine dehydratase of Caulobacter sp. (strain K31).